The chain runs to 505 residues: Maturase K (505 aa).

This sequence belongs to the intron maturase 2 family. MatK subfamily.

Its subcellular location is the plastid. The protein resides in the chloroplast. Its function is as follows. Usually encoded in the trnK tRNA gene intron. Probably assists in splicing its own and other chloroplast group II introns. This Illicium oligandrum (Star anise) protein is Maturase K.